A 463-amino-acid polypeptide reads, in one-letter code: Glucagon-like peptide 1 receptor (463 aa).

An N-terminal signal peptide occupies residues Met-1–Ala-21. Topologically, residues Gly-22–Glu-139 are extracellular. 3 cysteine pairs are disulfide-bonded: Cys-46/Cys-71, Cys-62/Cys-104, and Cys-85/Cys-126. 3 N-linked (GlcNAc...) asparagine glycosylation sites follow: Asn-63, Asn-82, and Asn-115. A helical transmembrane segment spans residues Gln-140–Ala-164. Residues Ile-165 to Thr-175 are Cytoplasmic-facing. Residues Arg-176–Leu-201 traverse the membrane as a helical segment. Residues Lys-202 to Arg-227 are Extracellular-facing. Cysteines 226 and 296 form a disulfide. Residues Leu-228–Leu-251 form a helical membrane-spanning segment. Residues Tyr-252–Ile-265 are Cytoplasmic-facing. A helical transmembrane segment spans residues Phe-266–Leu-290. The Extracellular portion of the chain corresponds to Tyr-291–Tyr-305. A helical transmembrane segment spans residues Trp-306–Ile-328. Over Cys-329–Arg-348 the chain is Cytoplasmic. Cys-341 is modified (ADP-ribosylcysteine). Residue Arg-348 is modified to ADP-ribosylarginine. The chain crosses the membrane as a helical span at residues Leu-349–Val-370. The segment at Ser-352 to Thr-355 is important for allosteric inhibitor binding. Topologically, residues Met-371 to Lys-383 are extracellular. The helical transmembrane segment at Leu-384 to Phe-404 threads the bilayer. Over Val-405–Ser-463 the chain is Cytoplasmic.

This sequence belongs to the G-protein coupled receptor 2 family. In terms of assembly, may form homodimers and heterodimers with GIPR. N-glycosylation enhances cell surface expression and lengthens receptor half-life by preventing degradation in the ER. As to expression, detected in pancreatic islets (at protein level). Detected in pancreatic islets and lungs.

Its subcellular location is the cell membrane. Its function is as follows. G-protein coupled receptor for glucagon-like peptide 1 (GLP-1). Ligand binding triggers activation of a signaling cascade that leads to the activation of adenylyl cyclase and increased intracellular cAMP levels. Plays a role in regulating insulin secretion in response to GLP-1. The protein is Glucagon-like peptide 1 receptor (Glp1r) of Mus musculus (Mouse).